The primary structure comprises 111 residues: Small ubiquitin-related modifier 3 (111 aa).

The 78-residue stretch at Ala-16–Gly-93 folds into the Ubiquitin-like domain. Residue Gly-93 forms a Glycyl lysine isopeptide (Gly-Lys) (interchain with K-? in acceptor proteins) linkage.

This sequence belongs to the ubiquitin family. SUMO subfamily. As to quaternary structure, interacts with SAE2, SCE1, SIZ1 and MMS21. Covalently attached to a number of proteins. Interacts with NPR1; this interaction promotes NPR1 phosphorylation and triggers its sumoylation and subsequent degradation.

It localises to the nucleus. It is found in the cytoplasm. Its function is as follows. Ubiquitin-like protein which can be covalently attached to target lysines as a monomer. Does not seem to be involved in protein degradation and may function as an antagonist of ubiquitin in the degradation process. Promotes NPR1 sumoylation to activate defense gene expression and regulate its degradation. The protein is Small ubiquitin-related modifier 3 of Arabidopsis thaliana (Mouse-ear cress).